The primary structure comprises 300 residues: Nucleotide-binding protein TM1040_2438 (300 aa).

An ATP-binding site is contributed by 24 to 31 (GPSGAGRT). A GTP-binding site is contributed by 71–74 (DPRN).

This sequence belongs to the RapZ-like family.

In terms of biological role, displays ATPase and GTPase activities. The protein is Nucleotide-binding protein TM1040_2438 of Ruegeria sp. (strain TM1040) (Silicibacter sp.).